The chain runs to 289 residues: 4-diphosphocytidyl-2-C-methyl-D-erythritol kinase (289 aa).

The active site involves Lys11. 93–103 contributes to the ATP binding site; sequence PLAAGLAGGSA. Asp135 is a catalytic residue.

It belongs to the GHMP kinase family. IspE subfamily.

The enzyme catalyses 4-CDP-2-C-methyl-D-erythritol + ATP = 4-CDP-2-C-methyl-D-erythritol 2-phosphate + ADP + H(+). It participates in isoprenoid biosynthesis; isopentenyl diphosphate biosynthesis via DXP pathway; isopentenyl diphosphate from 1-deoxy-D-xylulose 5-phosphate: step 3/6. In terms of biological role, catalyzes the phosphorylation of the position 2 hydroxy group of 4-diphosphocytidyl-2C-methyl-D-erythritol. The protein is 4-diphosphocytidyl-2-C-methyl-D-erythritol kinase of Thermoanaerobacter sp. (strain X514).